A 154-amino-acid polypeptide reads, in one-letter code: 6,7-dimethyl-8-ribityllumazine synthase (154 aa).

5-amino-6-(D-ribitylamino)uracil-binding positions include Phe26, 60–62, and 84–86; these read ALE and CII. A (2S)-2-hydroxy-3-oxobutyl phosphate-binding site is contributed by 89–90; that stretch reads ET. The active-site Proton donor is the His92. A 5-amino-6-(D-ribitylamino)uracil-binding site is contributed by Asn117. Arg131 serves as a coordination point for (2S)-2-hydroxy-3-oxobutyl phosphate.

This sequence belongs to the DMRL synthase family.

It catalyses the reaction (2S)-2-hydroxy-3-oxobutyl phosphate + 5-amino-6-(D-ribitylamino)uracil = 6,7-dimethyl-8-(1-D-ribityl)lumazine + phosphate + 2 H2O + H(+). The protein operates within cofactor biosynthesis; riboflavin biosynthesis; riboflavin from 2-hydroxy-3-oxobutyl phosphate and 5-amino-6-(D-ribitylamino)uracil: step 1/2. In terms of biological role, catalyzes the formation of 6,7-dimethyl-8-ribityllumazine by condensation of 5-amino-6-(D-ribitylamino)uracil with 3,4-dihydroxy-2-butanone 4-phosphate. This is the penultimate step in the biosynthesis of riboflavin. This chain is 6,7-dimethyl-8-ribityllumazine synthase, found in Acidovorax sp. (strain JS42).